Reading from the N-terminus, the 309-residue chain is MRKIIVGSRKSKLALTQTNWFIDQLKALGLPYEFEVKEIVTKGDVILDVTLSKVGGKGLFVKEIEHALLTKEIDMAVHSMKDMPAVLPEGLMIGCTPKRVDPRDAFISKSGASFKELAEGAILGTSSLRRSAQLLAARPDLQVKWIRGNIDTRLRKLKEEDYDAIILATAGLQRMGWDNEVITEHLDETLCVPAVGQGALAIECREDDKDLLQLLAHINDAVTEKTVAAERVFLHKLEGGCQVPIAGYATITENDAIELTALVGSMDGSVLLKETVVGTDPEKVGLEAADRLIKQGAKELILAANKGQQ.

Cys241 bears the S-(dipyrrolylmethanemethyl)cysteine mark.

The protein belongs to the HMBS family. As to quaternary structure, monomer. Dipyrromethane serves as cofactor.

It catalyses the reaction 4 porphobilinogen + H2O = hydroxymethylbilane + 4 NH4(+). It participates in porphyrin-containing compound metabolism; protoporphyrin-IX biosynthesis; coproporphyrinogen-III from 5-aminolevulinate: step 2/4. In terms of biological role, tetrapolymerization of the monopyrrole PBG into the hydroxymethylbilane pre-uroporphyrinogen in several discrete steps. In Bacillus cereus (strain AH820), this protein is Porphobilinogen deaminase.